The chain runs to 323 residues: tRNA (guanine(9)-N1)-methyltransferase (323 aa).

Positions 1–16 (MTEQTSEATVVNNSPA) are enriched in polar residues. Disordered stretches follow at residues 1 to 34 (MTEQ…EIEE) and 192 to 215 (TGAP…NSTD). Over residues 25–34 (EKPTPEEIEE) the composition is skewed to basic and acidic residues. In terms of domain architecture, SAM-dependent MTase TRM10-type spans 99 to 319 (KAQPIPSRQI…KVLPPRKIKS (221 aa)). Residues 204–215 (GNSNSNTTNSTD) show a composition bias toward low complexity. S-adenosyl-L-methionine is bound by residues 225-226 (LT), Gly-245, 249-253 (DKNRH), Cys-257, Leu-271, and 283-285 (HVL). Asp-249 acts as the Proton acceptor in catalysis.

Belongs to the class IV-like SAM-binding methyltransferase superfamily. TRM10 family. As to quaternary structure, monomer.

The protein resides in the cytoplasm. It localises to the nucleus. The catalysed reaction is guanosine(9) in tRNA + S-adenosyl-L-methionine = N(1)-methylguanosine(9) in tRNA + S-adenosyl-L-homocysteine + H(+). Its function is as follows. S-adenosyl-L-methionine-dependent guanine N(1)-methyltransferase that catalyzes the formation of N(1)-methylguanine at position 9 (m1G9) in cytoplasmic tRNA. The protein is tRNA (guanine(9)-N1)-methyltransferase of Candida albicans (strain SC5314 / ATCC MYA-2876) (Yeast).